The following is a 321-amino-acid chain: Lipoyl synthase (321 aa).

Cys-68, Cys-73, Cys-79, Cys-94, Cys-98, Cys-101, and Ser-308 together coordinate [4Fe-4S] cluster. Positions 80–297 constitute a Radical SAM core domain; that stretch reads FNHGTATFMI…KAEAMAMGFT (218 aa).

The protein belongs to the radical SAM superfamily. Lipoyl synthase family. It depends on [4Fe-4S] cluster as a cofactor.

The protein localises to the cytoplasm. It carries out the reaction [[Fe-S] cluster scaffold protein carrying a second [4Fe-4S](2+) cluster] + N(6)-octanoyl-L-lysyl-[protein] + 2 oxidized [2Fe-2S]-[ferredoxin] + 2 S-adenosyl-L-methionine + 4 H(+) = [[Fe-S] cluster scaffold protein] + N(6)-[(R)-dihydrolipoyl]-L-lysyl-[protein] + 4 Fe(3+) + 2 hydrogen sulfide + 2 5'-deoxyadenosine + 2 L-methionine + 2 reduced [2Fe-2S]-[ferredoxin]. Its pathway is protein modification; protein lipoylation via endogenous pathway; protein N(6)-(lipoyl)lysine from octanoyl-[acyl-carrier-protein]: step 2/2. Functionally, catalyzes the radical-mediated insertion of two sulfur atoms into the C-6 and C-8 positions of the octanoyl moiety bound to the lipoyl domains of lipoate-dependent enzymes, thereby converting the octanoylated domains into lipoylated derivatives. The sequence is that of Lipoyl synthase from Enterobacter sp. (strain 638).